Consider the following 222-residue polypeptide: MALSVETESHIYRALRTVSGAAAHLVALGFTIFVAVLARPGSSLFSWHPVLMSLAFSFLMTEALLVFSPESSLLRSLSRKGRARCHWVLQLLALLCALLGLGLVILHKEQLGKAHLATWHGRAGLLAVLWAGLQCSGGVGLLYPKLLPRWPLAKLKLYHATSGLVGYLLGGASLLLGMCSLWFTATVTGGVWYLAVLCPVITSLVIMNQVSNAYLYRKRIQP.

At 2-17 the chain is on the cytoplasmic side; it reads ALSVETESHIYRALRT. One can recognise a Cytochrome b561 domain in the interval 14–217; the sequence is ALRTVSGAAA…NQVSNAYLYR (204 aa). Residues 18–38 traverse the membrane as a helical segment; that stretch reads VSGAAAHLVALGFTIFVAVLA. Over 39 to 46 the chain is Lumenal; that stretch reads RPGSSLFS. The helical transmembrane segment at 47 to 67 threads the bilayer; sequence WHPVLMSLAFSFLMTEALLVF. Histidine 48 contributes to the heme b binding site. Residues 68 to 85 are Cytoplasmic-facing; sequence SPESSLLRSLSRKGRARC. Heme b-binding residues include histidine 86 and histidine 120. A helical membrane pass occupies residues 86-106; the sequence is HWVLQLLALLCALLGLGLVIL. The Lumenal portion of the chain corresponds to 107 to 122; the sequence is HKEQLGKAHLATWHGR. A helical membrane pass occupies residues 123–143; the sequence is AGLLAVLWAGLQCSGGVGLLY. Topologically, residues 144–162 are cytoplasmic; the sequence is PKLLPRWPLAKLKLYHATS. Residue histidine 159 coordinates heme b. The helical transmembrane segment at 163 to 183 threads the bilayer; the sequence is GLVGYLLGGASLLLGMCSLWF. Topologically, residues 184-186 are lumenal; sequence TAT. A helical transmembrane segment spans residues 187-207; it reads VTGGVWYLAVLCPVITSLVIM. Residues 208 to 222 lie on the Cytoplasmic side of the membrane; sequence NQVSNAYLYRKRIQP.

Heme b serves as cofactor.

It is found in the endoplasmic reticulum membrane. Its subcellular location is the cytoplasmic vesicle membrane. The enzyme catalyses monodehydro-L-ascorbate radical(out) + L-ascorbate(in) = monodehydro-L-ascorbate radical(in) + L-ascorbate(out). It catalyses the reaction Fe(3+)(out) + L-ascorbate(in) = monodehydro-L-ascorbate radical(in) + Fe(2+)(out) + H(+). Its function is as follows. Transmembrane reductase that may use ascorbate as an electron donor in the cytoplasm and transfer electrons across endoplasmic reticulum membranes to reduce monodehydro-L-ascorbate radical and iron cations Fe(3+) in the lumen of that compartment. This is Transmembrane reductase CYB561D2 from Bos taurus (Bovine).